A 745-amino-acid chain; its full sequence is MAQKLEAKGGKGGNQWDDLLDHDNIAKIHVQGGHEGIQYVKFDYVKFDNLKIGQPKLGSIHGLSRKGFTQTFEIDPTSEYIVSVEGYYDESKGIIQALKFKTNKKTSDMIGYDENGLKFSLEVKGKAIIGFHGFADTNLNSLGAYFAPAPPTKFDYQGGSGAQLWDDGSNYNGVRKVSFSLDDTEIRQIRIEYDKSGLVEKREYGSNVGRQEEFVLDYPTEYIIYMEGTCDIVSDTSKNRVRSLMFKTSKGRTSPIFGKVAARKFVFESNGSALIGFHGRAAAAVDAIGAYFSPLILSAPAPPPPPAEKLQAKGGNGGNQWDDLADHDHVTKIYVQGGQEGIQYVKFDYVKNGQPQSGSVHGLLGRGFTQTFEIDPTNEHLVSVEGYYDESKGLVQGLKFKTNKKTSDMIGYDENGLKFSLEVNGKKIIGFHGYAQTYLNSLGAYFVTAPPTKFDYQGGSGAQLWDDGTNYNGVRKISFALDANEIRQIRIDYDKGGLIERREYGGNVGRQEEFVVDYPSEYIIYMEGTCDIVSDASKNRVRSLMFKTSKGRTSPIFGKVAARKFVFESNGSALIGFHGRAAAAVDAIGAYFSRFILPPSAETLQAKGGEGGDPWSDGVFNGVRNIYVGQGENGVSAVKFVYDKDSQVAEGNDHGKPTLLGYEEFKLEYPSEYITTVEGCFDKIFGSGGGVITMLKFKTNKRTSPPFGLETTSNFVLGKEGYKIVGFHGTSSHELHQLGVYVMPI.

Jacalin-type lectin domains lie at 2-148 (AQKL…YFAP), 151-294 (PTKF…YFSP), 307-448 (AEKL…YFVT), 451-594 (PTKF…YFSR), and 601-744 (AETL…YVMP).

The protein belongs to the jacalin lectin family.

In Arabidopsis thaliana (Mouse-ear cress), this protein is Jacalin-related lectin 4 (JAL4).